We begin with the raw amino-acid sequence, 322 residues long: ATP-dependent 6-phosphofructokinase (322 aa).

ATP contacts are provided by residues G12, 73–74 (RF), and 103–106 (GDGT). D104 contacts Mg(2+). 126-128 (TID) serves as a coordination point for substrate. The active-site Proton acceptor is the D128. R155 is an ADP binding site. Residues R163 and 170–172 (MGR) each bind substrate. Residues 186 to 188 (GSE), K212, and 214 to 216 (KPS) contribute to the ADP site. Substrate-binding positions include E223, R245, and 251-254 (HTQR).

This sequence belongs to the phosphofructokinase type A (PFKA) family. ATP-dependent PFK group I subfamily. Prokaryotic clade 'B1' sub-subfamily. Homotetramer. It depends on Mg(2+) as a cofactor.

The protein localises to the cytoplasm. It carries out the reaction beta-D-fructose 6-phosphate + ATP = beta-D-fructose 1,6-bisphosphate + ADP + H(+). The protein operates within carbohydrate degradation; glycolysis; D-glyceraldehyde 3-phosphate and glycerone phosphate from D-glucose: step 3/4. Allosterically activated by ADP and other diphosphonucleosides, and allosterically inhibited by phosphoenolpyruvate. Catalyzes the phosphorylation of D-fructose 6-phosphate to fructose 1,6-bisphosphate by ATP, the first committing step of glycolysis. The polypeptide is ATP-dependent 6-phosphofructokinase (Mesomycoplasma hyopneumoniae (strain 232) (Mycoplasma hyopneumoniae)).